Reading from the N-terminus, the 209-residue chain is Thiamine-phosphate synthase (209 aa).

Residues 36 to 40 and Asn68 contribute to the 4-amino-2-methyl-5-(diphosphooxymethyl)pyrimidine site; that span reads QYRDK. The Mg(2+) site is built by Asp69 and Asp87. Thr106 lines the 4-amino-2-methyl-5-(diphosphooxymethyl)pyrimidine pocket. 133–135 contributes to the 2-[(2R,5Z)-2-carboxy-4-methylthiazol-5(2H)-ylidene]ethyl phosphate binding site; the sequence is SST. Residue Lys136 coordinates 4-amino-2-methyl-5-(diphosphooxymethyl)pyrimidine. 2-[(2R,5Z)-2-carboxy-4-methylthiazol-5(2H)-ylidene]ethyl phosphate is bound at residue Gly163.

Belongs to the thiamine-phosphate synthase family. Mg(2+) is required as a cofactor.

The catalysed reaction is 2-[(2R,5Z)-2-carboxy-4-methylthiazol-5(2H)-ylidene]ethyl phosphate + 4-amino-2-methyl-5-(diphosphooxymethyl)pyrimidine + 2 H(+) = thiamine phosphate + CO2 + diphosphate. It catalyses the reaction 2-(2-carboxy-4-methylthiazol-5-yl)ethyl phosphate + 4-amino-2-methyl-5-(diphosphooxymethyl)pyrimidine + 2 H(+) = thiamine phosphate + CO2 + diphosphate. It carries out the reaction 4-methyl-5-(2-phosphooxyethyl)-thiazole + 4-amino-2-methyl-5-(diphosphooxymethyl)pyrimidine + H(+) = thiamine phosphate + diphosphate. It participates in cofactor biosynthesis; thiamine diphosphate biosynthesis; thiamine phosphate from 4-amino-2-methyl-5-diphosphomethylpyrimidine and 4-methyl-5-(2-phosphoethyl)-thiazole: step 1/1. In terms of biological role, condenses 4-methyl-5-(beta-hydroxyethyl)thiazole monophosphate (THZ-P) and 2-methyl-4-amino-5-hydroxymethyl pyrimidine pyrophosphate (HMP-PP) to form thiamine monophosphate (TMP). The protein is Thiamine-phosphate synthase of Pseudomonas aeruginosa (strain UCBPP-PA14).